The primary structure comprises 118 residues: Phosphoribosyl-AMP cyclohydrolase (118 aa).

Aspartate 85 lines the Mg(2+) pocket. Position 86 (cysteine 86) interacts with Zn(2+). Residues aspartate 87 and aspartate 89 each contribute to the Mg(2+) site. Cysteine 102 and cysteine 109 together coordinate Zn(2+).

It belongs to the PRA-CH family. In terms of assembly, homodimer. Mg(2+) serves as cofactor. Zn(2+) is required as a cofactor.

It is found in the cytoplasm. It catalyses the reaction 1-(5-phospho-beta-D-ribosyl)-5'-AMP + H2O = 1-(5-phospho-beta-D-ribosyl)-5-[(5-phospho-beta-D-ribosylamino)methylideneamino]imidazole-4-carboxamide. It functions in the pathway amino-acid biosynthesis; L-histidine biosynthesis; L-histidine from 5-phospho-alpha-D-ribose 1-diphosphate: step 3/9. Its function is as follows. Catalyzes the hydrolysis of the adenine ring of phosphoribosyl-AMP. This chain is Phosphoribosyl-AMP cyclohydrolase, found in Sulfurisphaera tokodaii (strain DSM 16993 / JCM 10545 / NBRC 100140 / 7) (Sulfolobus tokodaii).